The chain runs to 309 residues: Ribonuclease Z (309 aa).

Zn(2+)-binding residues include His-63, His-65, Asp-67, His-68, His-145, Asp-216, and His-274. Asp-67 functions as the Proton acceptor in the catalytic mechanism.

Belongs to the RNase Z family. In terms of assembly, homodimer. Zn(2+) is required as a cofactor.

The enzyme catalyses Endonucleolytic cleavage of RNA, removing extra 3' nucleotides from tRNA precursor, generating 3' termini of tRNAs. A 3'-hydroxy group is left at the tRNA terminus and a 5'-phosphoryl group is left at the trailer molecule.. Its function is as follows. Zinc phosphodiesterase, which displays some tRNA 3'-processing endonuclease activity. Probably involved in tRNA maturation, by removing a 3'-trailer from precursor tRNA. The sequence is that of Ribonuclease Z from Streptococcus gordonii (strain Challis / ATCC 35105 / BCRC 15272 / CH1 / DL1 / V288).